A 644-amino-acid chain; its full sequence is Major core protein OPG129 (644 aa).

A propeptide spanning residues 1-61 is cleaved from the precursor; the sequence is MEAVVNSDVF…IVDDDFISAG (61 aa).

The protein belongs to the orthopoxvirus OPG129 family. The 73-kDa precursor is cleaved to a mature protein of 60 kDa during virion maturation. Proteolytic cleavage of major core proteins OPG129, OPG136, and OPG098, which occurs at a late stage of core formation, is required for production of infectious mature virions (MV).

It is found in the virion. Its function is as follows. Major component of the virion core that undergoes proteolytic processing during the immature virion (IV) to mature virion (MV) transition. Essential for the formation of a structurally normal core. This chain is Major core protein OPG129 (OPG129), found in Homo sapiens (Human).